The primary structure comprises 81 residues: MAKTVLGIHVTFLTLLFAVILLNDVMYTPVEKICERASGTWKGICIHSNDCNNQCVKWENAGSGSCHYQFPNYMCFCYFNC.

The first 31 residues, 1-31 (MAKTVLGIHVTFLTLLFAVILLNDVMYTPVE), serve as a signal peptide directing secretion. Cystine bridges form between cysteine 34–cysteine 81, cysteine 45–cysteine 66, cysteine 51–cysteine 75, and cysteine 55–cysteine 77.

In terms of biological role, antimicrobial peptide probably active against fungi like B.sorokiniana, F.oxysporum, F.graminearum, F.avenaceum, B.cinerea, P.beta, P.infestans and P.debaryanum. This chain is Antimicrobial peptide D2, found in Stellaria media (Common chickweed).